A 552-amino-acid chain; its full sequence is Arginine--tRNA ligase (552 aa).

The short motif at 123–133 (ANPTGPLTIGR) is the 'HIGH' region element.

Belongs to the class-I aminoacyl-tRNA synthetase family. In terms of assembly, monomer.

The protein localises to the cytoplasm. The enzyme catalyses tRNA(Arg) + L-arginine + ATP = L-arginyl-tRNA(Arg) + AMP + diphosphate. The sequence is that of Arginine--tRNA ligase from Chlorobium phaeovibrioides (strain DSM 265 / 1930) (Prosthecochloris vibrioformis (strain DSM 265)).